A 401-amino-acid polypeptide reads, in one-letter code: Nodulation protein E (401 aa).

The Ketosynthase family 3 (KS3) domain maps to aspartate 2–glutamine 400. Active-site for beta-ketoacyl synthase activity residues include cysteine 161, histidine 293, and histidine 330. Residues histidine 328–isoleucine 347 traverse the membrane as a helical segment.

It belongs to the thiolase-like superfamily. Beta-ketoacyl-ACP synthases family.

The protein resides in the cell inner membrane. Its function is as follows. Proposed to synthesize NOD factor fatty acyl chain. Involved in the synthesis of a highly unsaturated fatty acid moiety, which forms part of a lipo-oligosaccharide that is responsible for host specificity. The chain is Nodulation protein E (nodE) from Rhizobium meliloti (Ensifer meliloti).